A 101-amino-acid chain; its full sequence is Small ribosomal subunit protein uS14 (101 aa).

Belongs to the universal ribosomal protein uS14 family. Part of the 30S ribosomal subunit. Contacts proteins S3 and S10.

Binds 16S rRNA, required for the assembly of 30S particles and may also be responsible for determining the conformation of the 16S rRNA at the A site. This is Small ribosomal subunit protein uS14 from Wigglesworthia glossinidia brevipalpis.